We begin with the raw amino-acid sequence, 252 residues long: tRNA pseudouridine synthase A (252 aa).

The Nucleophile role is filled by Asp-52. Residue Tyr-112 coordinates substrate.

It belongs to the tRNA pseudouridine synthase TruA family. As to quaternary structure, homodimer.

The enzyme catalyses uridine(38/39/40) in tRNA = pseudouridine(38/39/40) in tRNA. Formation of pseudouridine at positions 38, 39 and 40 in the anticodon stem and loop of transfer RNAs. In Porphyromonas gingivalis (strain ATCC 33277 / DSM 20709 / CIP 103683 / JCM 12257 / NCTC 11834 / 2561), this protein is tRNA pseudouridine synthase A.